We begin with the raw amino-acid sequence, 279 residues long: Tryptophan synthase alpha chain (279 aa).

Catalysis depends on proton acceptor residues Glu-50 and Asp-61.

It belongs to the TrpA family. In terms of assembly, tetramer of two alpha and two beta chains.

The enzyme catalyses (1S,2R)-1-C-(indol-3-yl)glycerol 3-phosphate + L-serine = D-glyceraldehyde 3-phosphate + L-tryptophan + H2O. It participates in amino-acid biosynthesis; L-tryptophan biosynthesis; L-tryptophan from chorismate: step 5/5. The alpha subunit is responsible for the aldol cleavage of indoleglycerol phosphate to indole and glyceraldehyde 3-phosphate. The chain is Tryptophan synthase alpha chain from Brucella melitensis biotype 1 (strain ATCC 23456 / CCUG 17765 / NCTC 10094 / 16M).